The primary structure comprises 107 residues: uncharacterized protein (107 aa).

A run of 2 helical transmembrane segments spans residues 5 to 25 and 42 to 62; these read WTII…VINV and ILVI…VGIF. Positions 82 to 92 are enriched in basic and acidic residues; that stretch reads IHKQEDTHLAD. Residues 82–107 form a disordered region; sequence IHKQEDTHLADQTDTQDASAMIEKKD.

The protein localises to the cell membrane. This is an uncharacterized protein from Bacillus subtilis (strain 168).